The following is a 63-amino-acid chain: Cytotoxin homolog S3C2 (63 aa).

Disulfide bonds link cysteine 3/cysteine 22, cysteine 15/cysteine 40, cysteine 44/cysteine 55, and cysteine 56/cysteine 61.

The protein belongs to the three-finger toxin family. Short-chain subfamily. Orphan group XVI sub-subfamily. In terms of tissue distribution, expressed by the venom gland.

The protein localises to the secreted. The polypeptide is Cytotoxin homolog S3C2 (Aspidelaps scutatus (Shield-nose snake)).